A 373-amino-acid chain; its full sequence is Flagellar P-ring protein (373 aa).

The signal sequence occupies residues Met1–Ala30.

Belongs to the FlgI family. As to quaternary structure, the basal body constitutes a major portion of the flagellar organelle and consists of four rings (L,P,S, and M) mounted on a central rod.

It localises to the periplasm. Its subcellular location is the bacterial flagellum basal body. Its function is as follows. Assembles around the rod to form the L-ring and probably protects the motor/basal body from shearing forces during rotation. The polypeptide is Flagellar P-ring protein (Aliivibrio fischeri (strain ATCC 700601 / ES114) (Vibrio fischeri)).